The sequence spans 359 residues: Isopentenyl-diphosphate delta-isomerase (359 aa).

Residue 12–13 (RK) coordinates substrate. FMN is bound by residues S68, 69-71 (AMT), S99, and N128. 99 to 101 (SQR) is a binding site for substrate. Residue Q162 coordinates substrate. E163 contacts Mg(2+). FMN is bound by residues K194, T224, 277–279 (GIR), and 298–299 (AL).

It belongs to the IPP isomerase type 2 family. Homooctamer. Dimer of tetramers. The cofactor is FMN. It depends on NADPH as a cofactor. Requires Mg(2+) as cofactor.

It is found in the cytoplasm. The catalysed reaction is isopentenyl diphosphate = dimethylallyl diphosphate. Functionally, involved in the biosynthesis of isoprenoids. Catalyzes the 1,3-allylic rearrangement of the homoallylic substrate isopentenyl (IPP) to its allylic isomer, dimethylallyl diphosphate (DMAPP). This chain is Isopentenyl-diphosphate delta-isomerase, found in Methanoregula boonei (strain DSM 21154 / JCM 14090 / 6A8).